We begin with the raw amino-acid sequence, 1071 residues long: Nonribosomal peptide synthetase flvI (1071 aa).

The adenylation stretch occupies residues 33–417 (RRVLEQHDAP…GSLHFISRKD (385 aa)). A Carrier domain is found at 552–628 (MPLTEIELKM…MLCQNIKTDV (77 aa)). Residue serine 589 is modified to O-(pantetheine 4'-phosphoryl)serine. A condensation region spans residues 689–961 (NYTLRLEFKL…IDDRDIEQLS (273 aa)).

This sequence belongs to the NRP synthetase family.

The catalysed reaction is (2S)-5,5-dimethylpiperidine-2-carboxylate + 10-hydroxy-pre-flavunoidine + ATP = flavunoidine + AMP + diphosphate + H(+). It functions in the pathway secondary metabolite biosynthesis; terpenoid biosynthesis. Functionally, nonribosomal peptide synthetase; part of the gene cluster that mediates the biosynthesis of flavunoidine, an alkaloidal terpenoid with a tetracyclic cage-like core connected to dimethylcadaverine via a C-N bond and acylated with 5,5-dimethyl-L-pipecolate. The tetracyclic core is synthesized by the terpene cyclase flvE and the cytochrome P450 monooxygenase flvD. The terpene cyclase flvE catalyzes the cyclization of farnesyl pyrophosphate (FPP) to form (1R,4R,5S)-(+)-acoradiene and the cytochrome P450 monooxygenase flvD is then responsible for oxidative conversion of (1R,4R,5S)-(+)-acoradiene into the tetracyclic cage present in the final product flavunoidine. In parallel, the N-methyltransferase flvH dimethylates L-lysine to give N,N-dimethyl-L-Lysin which is decarboxylated by flvG to afford dimethylcadaverine. The terpene cyclase-like protein flvF is the enzyme that attaches the dimethylcadaverine precusor at the C-7 of the tetracyclic cage to yield pre-flavunoidine. The cytochrome monooxygenase flvC hydroxylates the C-10 position of pre-flavunoidine whereas the NRPS flvI acylates the terpenoid core at the hydroxylated C-10 with dimethylpipecolate to yield final flavunoidine. The bifunctional enzyme flvA and the dehydrogenase flvB are responsible for the synthesis of the dimethylpipecolate precursor. The PLP-dependent lyase domain of flvA might use L-O-acetyl-homoserine and alpha-keto-isovalerate to form an intermediary ketone that can cyclize intramolecularly to yield an imine. The imine can be reduced by flvB to yield the 6-carboxylated pipecolate. The C-terminal alpha-KG-dependent oxygenase domain of flvA is then proposed to catalyze the decarboxylation to yield dimethylpipecolate. The chain is Nonribosomal peptide synthetase flvI from Aspergillus flavus (strain ATCC 200026 / FGSC A1120 / IAM 13836 / NRRL 3357 / JCM 12722 / SRRC 167).